A 447-amino-acid chain; its full sequence is Tubulin beta-2 chain (447 aa).

Gln-11, Glu-69, Ser-138, Gly-142, Thr-143, Gly-144, Asn-204, and Asn-226 together coordinate GTP. Position 69 (Glu-69) interacts with Mg(2+). Residues 427 to 447 (DASISEGEEEYEEEQQLENEE) are disordered. The segment covering 432 to 447 (EGEEEYEEEQQLENEE) has biased composition (acidic residues).

Belongs to the tubulin family. In terms of assembly, dimer of alpha and beta chains. A typical microtubule is a hollow water-filled tube with an outer diameter of 25 nm and an inner diameter of 15 nM. Alpha-beta heterodimers associate head-to-tail to form protofilaments running lengthwise along the microtubule wall with the beta-tubulin subunit facing the microtubule plus end conferring a structural polarity. Microtubules usually have 13 protofilaments but different protofilament numbers can be found in some organisms and specialized cells. Mg(2+) is required as a cofactor.

It localises to the cytoplasm. The protein resides in the cytoskeleton. In terms of biological role, tubulin is the major constituent of microtubules, a cylinder consisting of laterally associated linear protofilaments composed of alpha- and beta-tubulin heterodimers. Microtubules grow by the addition of GTP-tubulin dimers to the microtubule end, where a stabilizing cap forms. Below the cap, tubulin dimers are in GDP-bound state, owing to GTPase activity of alpha-tubulin. The sequence is that of Tubulin beta-2 chain (TUB2) from Erysiphe pisi (Pea powdery mildew).